A 189-amino-acid polypeptide reads, in one-letter code: Elongation factor P (189 aa).

It belongs to the elongation factor P family.

It is found in the cytoplasm. It functions in the pathway protein biosynthesis; polypeptide chain elongation. Its function is as follows. Involved in peptide bond synthesis. Stimulates efficient translation and peptide-bond synthesis on native or reconstituted 70S ribosomes in vitro. Probably functions indirectly by altering the affinity of the ribosome for aminoacyl-tRNA, thus increasing their reactivity as acceptors for peptidyl transferase. This Phytoplasma australiense protein is Elongation factor P.